A 729-amino-acid chain; its full sequence is Glycine--tRNA ligase (729 aa).

A mitochondrion-targeting transit peptide spans 1–33 (MPCLLPSLLRATRAALPLLSPPRVVAASASQRL). Residues 53–109 (LLAPLRLAVRQQGDFVRKLKEDKAPQVDVDRAVAELKARKRVLEAKELALQPKDDIV) enclose the WHEP-TRS domain. The residue at position 194 (K194) is an N6-acetyllysine. Glycine is bound at residue E289. ATP contacts are provided by residues 321-323 (RNE) and 332-333 (RV). E340 serves as a coordination point for glycine. The residue at position 443 (Y443) is a Phosphotyrosine. 447 to 448 (EI) lines the ATP pocket. K491 bears the N6-acetyllysine mark. 566–568 (EPS) provides a ligand contact to glycine. R573 contributes to the ATP binding site. S690 is subject to Phosphoserine. T726 carries the phosphothreonine modification.

It belongs to the class-II aminoacyl-tRNA synthetase family. Homodimer.

The protein localises to the cytoplasm. It localises to the mitochondrion. It is found in the cell projection. The protein resides in the axon. Its subcellular location is the secreted. The protein localises to the extracellular exosome. It catalyses the reaction tRNA(Gly) + glycine + ATP = glycyl-tRNA(Gly) + AMP + diphosphate. The catalysed reaction is 2 ATP + H(+) = P(1),P(4)-bis(5'-adenosyl) tetraphosphate + diphosphate. In terms of biological role, catalyzes the ATP-dependent ligation of glycine to the 3'-end of its cognate tRNA, via the formation of an aminoacyl-adenylate intermediate (Gly-AMP). Also produces diadenosine tetraphosphate (Ap4A), a universal pleiotropic signaling molecule needed for cell regulation pathways, by direct condensation of 2 ATPs. Thereby, may play a special role in Ap4A homeostasis. The sequence is that of Glycine--tRNA ligase (Gars1) from Mus musculus (Mouse).